The chain runs to 330 residues: tRNA N6-adenosine threonylcarbamoyltransferase (330 aa).

Fe cation is bound by residues His110 and His114. Substrate-binding positions include 133-137 (MVSGG), Asp166, Gly179, Asp183, and Asn271. Asp299 lines the Fe cation pocket.

It belongs to the KAE1 / TsaD family. Requires Fe(2+) as cofactor.

The protein resides in the cytoplasm. The catalysed reaction is L-threonylcarbamoyladenylate + adenosine(37) in tRNA = N(6)-L-threonylcarbamoyladenosine(37) in tRNA + AMP + H(+). Its function is as follows. Required for the formation of a threonylcarbamoyl group on adenosine at position 37 (t(6)A37) in tRNAs that read codons beginning with adenine. Is involved in the transfer of the threonylcarbamoyl moiety of threonylcarbamoyl-AMP (TC-AMP) to the N6 group of A37, together with TsaE and TsaB. TsaD likely plays a direct catalytic role in this reaction. The polypeptide is tRNA N6-adenosine threonylcarbamoyltransferase (Thermosipho africanus (strain TCF52B)).